A 210-amino-acid chain; its full sequence is Imidazoleglycerol-phosphate dehydratase (210 aa).

Belongs to the imidazoleglycerol-phosphate dehydratase family.

Its subcellular location is the cytoplasm. The catalysed reaction is D-erythro-1-(imidazol-4-yl)glycerol 3-phosphate = 3-(imidazol-4-yl)-2-oxopropyl phosphate + H2O. It participates in amino-acid biosynthesis; L-histidine biosynthesis; L-histidine from 5-phospho-alpha-D-ribose 1-diphosphate: step 6/9. The polypeptide is Imidazoleglycerol-phosphate dehydratase (Mycobacterium leprae (strain Br4923)).